The following is a 445-amino-acid chain: KICSTOR subunit 2 (445 aa).

Belongs to the KICS2 family. In terms of assembly, part of the KICSTOR complex composed of KPTN, ITFG2, KICS2 and SZT2. SZT2 probably serves as a link between the other three proteins in the KICSTOR complex and may mediate the direct interaction with the GATOR complex via GATOR1. The KICSTOR complex interacts directly with the GATOR1 complex and most probably indirectly with the GATOR2 complex in an amino acid-independent manner.

Its subcellular location is the lysosome membrane. Its function is as follows. As part of the KICSTOR complex functions in the amino acid-sensing branch of the TORC1 signaling pathway. Recruits, in an amino acid-independent manner, the GATOR1 complex to the lysosomal membranes and allows its interaction with GATOR2 and the RAG GTPases. Functions upstream of the RAG GTPases and is required to negatively regulate mTORC1 signaling in absence of amino acids. In absence of the KICSTOR complex mTORC1 is constitutively localized to the lysosome and activated. The KICSTOR complex is also probably involved in the regulation of mTORC1 by glucose. This chain is KICSTOR subunit 2, found in Homo sapiens (Human).